The sequence spans 85 residues: Makatoxin-3 (85 aa).

The signal sequence occupies residues 1 to 19 (MNYLIVISFALLLMTGVES). The LCN-type CS-alpha/beta domain maps to 21 to 83 (RDAYIAKKEN…VPIRIPGPCI (63 aa)). 4 cysteine pairs are disulfide-bonded: Cys31/Cys82, Cys35/Cys55, Cys41/Cys65, and Cys45/Cys67.

This sequence belongs to the long (4 C-C) scorpion toxin superfamily. Sodium channel inhibitor family. Alpha subfamily. In terms of tissue distribution, expressed by the venom gland.

It is found in the secreted. Functionally, this protein markedly relaxes the rat carbachol-precontracted anococcygeus muscle. This relaxation is inhibited by the inhibitor of nitric oxide (NO) synthase, N-nitro-L-arginine methyl ester (L-NAME), suggesting that the response induced by this protein is NO-mediated. This chain is Makatoxin-3, found in Olivierus martensii (Manchurian scorpion).